The chain runs to 278 residues: Large ribosomal subunit protein uL2 (278 aa).

Residues 223-278 (GVAMNPIDHPHGGGEGRTSGGRHPVTPWGFPTKGKKTRSNKRTDTFIVSSRHNRKK) are disordered.

The protein belongs to the universal ribosomal protein uL2 family. As to quaternary structure, part of the 50S ribosomal subunit. Forms a bridge to the 30S subunit in the 70S ribosome.

In terms of biological role, one of the primary rRNA binding proteins. Required for association of the 30S and 50S subunits to form the 70S ribosome, for tRNA binding and peptide bond formation. It has been suggested to have peptidyltransferase activity; this is somewhat controversial. Makes several contacts with the 16S rRNA in the 70S ribosome. The chain is Large ribosomal subunit protein uL2 from Methylobacterium nodulans (strain LMG 21967 / CNCM I-2342 / ORS 2060).